The sequence spans 110 residues: Small ribosomal subunit protein uS10 (110 aa).

The protein belongs to the universal ribosomal protein uS10 family. As to quaternary structure, part of the 30S ribosomal subunit.

In terms of biological role, involved in the binding of tRNA to the ribosomes. The polypeptide is Small ribosomal subunit protein uS10 (Ehrlichia ruminantium (strain Gardel)).